A 292-amino-acid polypeptide reads, in one-letter code: Elongation factor Ts (292 aa).

Residues 80-83 (TDSV) are involved in Mg(2+) ion dislocation from EF-Tu.

The protein belongs to the EF-Ts family.

Its subcellular location is the cytoplasm. In terms of biological role, associates with the EF-Tu.GDP complex and induces the exchange of GDP to GTP. It remains bound to the aminoacyl-tRNA.EF-Tu.GTP complex up to the GTP hydrolysis stage on the ribosome. The sequence is that of Elongation factor Ts from Lactiplantibacillus plantarum (strain ATCC BAA-793 / NCIMB 8826 / WCFS1) (Lactobacillus plantarum).